The following is a 115-amino-acid chain: U3-lycotoxin-Ls1a (115 aa).

The N-terminal stretch at 1 to 20 (MKFVLLFGVLLVTLFSYSSA) is a signal peptide. Positions 21-44 (EMLDDFDQADEEELLSLIEKEEAR) are excised as a propeptide. Cystine bridges form between cysteine 48–cysteine 63, cysteine 55–cysteine 72, cysteine 62–cysteine 87, and cysteine 74–cysteine 85.

It belongs to the neurotoxin 19 (CSTX) family. 01 subfamily. In terms of tissue distribution, expressed by the venom gland.

It localises to the secreted. The polypeptide is U3-lycotoxin-Ls1a (Lycosa singoriensis (Wolf spider)).